A 510-amino-acid chain; its full sequence is ATP synthase subunit alpha (510 aa).

Residue Gly-169 to Thr-176 participates in ATP binding.

Belongs to the ATPase alpha/beta chains family. F-type ATPases have 2 components, CF(1) - the catalytic core - and CF(0) - the membrane proton channel. CF(1) has five subunits: alpha(3), beta(3), gamma(1), delta(1), epsilon(1). CF(0) has three main subunits: a(1), b(2) and c(9-12). The alpha and beta chains form an alternating ring which encloses part of the gamma chain. CF(1) is attached to CF(0) by a central stalk formed by the gamma and epsilon chains, while a peripheral stalk is formed by the delta and b chains.

Its subcellular location is the cell inner membrane. It carries out the reaction ATP + H2O + 4 H(+)(in) = ADP + phosphate + 5 H(+)(out). Functionally, produces ATP from ADP in the presence of a proton gradient across the membrane. The alpha chain is a regulatory subunit. This is ATP synthase subunit alpha from Anaeromyxobacter dehalogenans (strain 2CP-1 / ATCC BAA-258).